A 69-amino-acid polypeptide reads, in one-letter code: DNA gyrase inhibitor YacG (69 aa).

Positions 13, 16, 32, and 36 each coordinate Zn(2+).

It belongs to the DNA gyrase inhibitor YacG family. As to quaternary structure, interacts with GyrB. Zn(2+) serves as cofactor.

Inhibits all the catalytic activities of DNA gyrase by preventing its interaction with DNA. Acts by binding directly to the C-terminal domain of GyrB, which probably disrupts DNA binding by the gyrase. The polypeptide is DNA gyrase inhibitor YacG (Neisseria meningitidis serogroup C / serotype 2a (strain ATCC 700532 / DSM 15464 / FAM18)).